A 94-amino-acid chain; its full sequence is Aspartyl/glutamyl-tRNA(Asn/Gln) amidotransferase subunit C (94 aa).

Belongs to the GatC family. Heterotrimer of A, B and C subunits.

It catalyses the reaction L-glutamyl-tRNA(Gln) + L-glutamine + ATP + H2O = L-glutaminyl-tRNA(Gln) + L-glutamate + ADP + phosphate + H(+). The catalysed reaction is L-aspartyl-tRNA(Asn) + L-glutamine + ATP + H2O = L-asparaginyl-tRNA(Asn) + L-glutamate + ADP + phosphate + 2 H(+). Allows the formation of correctly charged Asn-tRNA(Asn) or Gln-tRNA(Gln) through the transamidation of misacylated Asp-tRNA(Asn) or Glu-tRNA(Gln) in organisms which lack either or both of asparaginyl-tRNA or glutaminyl-tRNA synthetases. The reaction takes place in the presence of glutamine and ATP through an activated phospho-Asp-tRNA(Asn) or phospho-Glu-tRNA(Gln). This chain is Aspartyl/glutamyl-tRNA(Asn/Gln) amidotransferase subunit C, found in Desulfitobacterium hafniense (strain DSM 10664 / DCB-2).